We begin with the raw amino-acid sequence, 75 residues long: Translation initiation factor IF-1, chloroplastic (75 aa).

It belongs to the IF-1 family. In terms of assembly, component of the 30S ribosomal translation pre-initiation complex which assembles on the 30S ribosome in the order IF-2 and IF-3, IF-1 and N-formylmethionyl-tRNA(fMet); mRNA recruitment can occur at any time during PIC assembly.

Its subcellular location is the plastid. The protein localises to the chloroplast. Functionally, one of the essential components for the initiation of protein synthesis. Stabilizes the binding of IF-2 and IF-3 on the 30S subunit to which N-formylmethionyl-tRNA(fMet) subsequently binds. Helps modulate mRNA selection, yielding the 30S pre-initiation complex (PIC). Upon addition of the 50S ribosomal subunit IF-1, IF-2 and IF-3 are released leaving the mature 70S translation initiation complex. This Cucumis sativus (Cucumber) protein is Translation initiation factor IF-1, chloroplastic (infA).